A 642-amino-acid chain; its full sequence is Threonine--tRNA ligase (642 aa).

Residues 1 to 61 (MPVITLPDGS…ETDAELSIIT (61 aa)) enclose the TGS domain. The catalytic stretch occupies residues 243-534 (DHRKIGKQLD…LIEEYAGRFP (292 aa)). Zn(2+) is bound by residues Cys-334, His-385, and His-511.

Belongs to the class-II aminoacyl-tRNA synthetase family. Homodimer. The cofactor is Zn(2+).

Its subcellular location is the cytoplasm. It carries out the reaction tRNA(Thr) + L-threonine + ATP = L-threonyl-tRNA(Thr) + AMP + diphosphate + H(+). Its function is as follows. Catalyzes the attachment of threonine to tRNA(Thr) in a two-step reaction: L-threonine is first activated by ATP to form Thr-AMP and then transferred to the acceptor end of tRNA(Thr). Also edits incorrectly charged L-seryl-tRNA(Thr). This chain is Threonine--tRNA ligase, found in Shewanella baltica (strain OS155 / ATCC BAA-1091).